The sequence spans 499 residues: Glycerol kinase (499 aa).

Threonine 12 contributes to the ADP binding site. Residues threonine 12, threonine 13, and serine 14 each coordinate ATP. Threonine 12 serves as a coordination point for sn-glycerol 3-phosphate. Arginine 16 lines the ADP pocket. Residues arginine 82, glutamate 83, and tyrosine 134 each contribute to the sn-glycerol 3-phosphate site. Arginine 82, glutamate 83, and tyrosine 134 together coordinate glycerol. A Phosphohistidine; by HPr modification is found at histidine 230. Sn-glycerol 3-phosphate is bound at residue aspartate 244. Glycerol is bound by residues aspartate 244 and glutamine 245. ADP-binding residues include threonine 266 and glycine 309. ATP is bound by residues threonine 266, glycine 309, glutamine 313, and glycine 410. Residues glycine 410 and asparagine 414 each coordinate ADP.

The protein belongs to the FGGY kinase family. Homotetramer and homodimer (in equilibrium). Post-translationally, the phosphoenolpyruvate-dependent sugar phosphotransferase system (PTS), including enzyme I, and histidine-containing protein (HPr) are required for the phosphorylation, which leads to the activation of the enzyme.

The catalysed reaction is glycerol + ATP = sn-glycerol 3-phosphate + ADP + H(+). Its pathway is polyol metabolism; glycerol degradation via glycerol kinase pathway; sn-glycerol 3-phosphate from glycerol: step 1/1. With respect to regulation, activated by phosphorylation and inhibited by fructose 1,6-bisphosphate (FBP). Its function is as follows. Key enzyme in the regulation of glycerol uptake and metabolism. Catalyzes the phosphorylation of glycerol to yield sn-glycerol 3-phosphate. The polypeptide is Glycerol kinase (Staphylococcus epidermidis (strain ATCC 12228 / FDA PCI 1200)).